Here is a 441-residue protein sequence, read N- to C-terminus: Ribosomal protein uS12 methylthiotransferase RimO (441 aa).

The MTTase N-terminal domain maps to 8 to 118; that stretch reads PKIGFVSLGC…VLEHVHHYVP (111 aa). [4Fe-4S] cluster-binding residues include Cys17, Cys53, Cys82, Cys150, Cys154, and Cys157. In terms of domain architecture, Radical SAM core spans 136–373; the sequence is LTPRHYAYLK…MQLQQQISAE (238 aa). A TRAM domain is found at 376–441; it reads QEKVGKEILV…DEYDLWGSRV (66 aa).

It belongs to the methylthiotransferase family. RimO subfamily. [4Fe-4S] cluster is required as a cofactor.

The protein resides in the cytoplasm. It carries out the reaction L-aspartate(89)-[ribosomal protein uS12]-hydrogen + (sulfur carrier)-SH + AH2 + 2 S-adenosyl-L-methionine = 3-methylsulfanyl-L-aspartate(89)-[ribosomal protein uS12]-hydrogen + (sulfur carrier)-H + 5'-deoxyadenosine + L-methionine + A + S-adenosyl-L-homocysteine + 2 H(+). In terms of biological role, catalyzes the methylthiolation of an aspartic acid residue of ribosomal protein uS12. This chain is Ribosomal protein uS12 methylthiotransferase RimO, found in Escherichia fergusonii (strain ATCC 35469 / DSM 13698 / CCUG 18766 / IAM 14443 / JCM 21226 / LMG 7866 / NBRC 102419 / NCTC 12128 / CDC 0568-73).